The sequence spans 336 residues: MAIYTRTGDAGTTSLFTGQRVSKTHPRVEAYGTLDELNAALSLCACAAADENHRTLLEAIQQQLFWFSAELASDSEQPSPKQRYISSEEISALEAAIDRAMARVEPLHSFILPGRCEAASRLHFARTLARRAERRLVELATEVNVRQVLMRYINRLSDCLYALARAEDSDAHQANIIREVSKRYLAACQPPHSKETTPVALSFHDLHQLTRAAVERAQQLQVPVVVSIVDAHGTETVTWRMPDALLVSSELAPKKAWTAVAMKTATHELSDVVQPGAALYGLESHLQGKVVTFGGGYALWRDGILIGGLGISGGSVEQDMDIAQTAIAAINVGTHQ.

Residues 1 to 185 (MAIYTRTGDA…IIREVSKRYL (185 aa)) form a pduON region. Positions 194 to 336 (KETTPVALSF…IAAINVGTHQ (143 aa)) are pduOC. Histidine 207 serves as a coordination point for heme. Glutamate 215 and glutamine 218 together coordinate Mg(2+).

The protein belongs to the Cob(I)alamin adenosyltransferase family. PduO subfamily. In terms of assembly, the C-terminal domain (PduOC) forms stable octamers and also crystallizes as an octamer. Forms a complex with PduS. It depends on heme b as a cofactor. Mg(2+) serves as cofactor.

It is found in the bacterial microcompartment. The enzyme catalyses cob(I)alamin-[corrinoid adenosyltransferase] + ATP = apo-[corrinoid adenosyltransferase] + adenosylcob(III)alamin + triphosphate. The protein operates within polyol metabolism; 1,2-propanediol degradation. Its pathway is cofactor biosynthesis; adenosylcobalamin biosynthesis. Inhibited by ADP but not significantly by other nucleotides, inhibited by diphosphate and less well by triphosphate. Functionally, converts cob(I)alamin to adenosylcobalamin (adenosylcob(III)alamin), the cofactor for propanediol dehydratase. Found in the bacterial microcompartment (BMC) dedicated to 1,2-propanediol (1,2-PD) degradation. For adenosylcobalamin synthesis dATP can replace ATP, but no other nucleotides will substitute. PduS and PduO allow regeneration of the adenosylcobalamin cofactor within the BMC. In terms of biological role, the 1,2-PD-specific bacterial microcompartment (BMC) concentrates low levels of 1,2-PD catabolic enzymes, concentrates volatile reaction intermediates thus enhancing pathway flux and keeps the level of toxic, mutagenic propionaldehyde low. The protein is Corrinoid adenosyltransferase PduO of Salmonella typhimurium (strain LT2 / SGSC1412 / ATCC 700720).